Reading from the N-terminus, the 363-residue chain is Uroporphyrinogen decarboxylase (363 aa).

Substrate contacts are provided by residues 27–31 (RQAGR), aspartate 77, tyrosine 157, threonine 212, and histidine 333.

It belongs to the uroporphyrinogen decarboxylase family. Homodimer.

Its subcellular location is the cytoplasm. The enzyme catalyses uroporphyrinogen III + 4 H(+) = coproporphyrinogen III + 4 CO2. It participates in porphyrin-containing compound metabolism; protoporphyrin-IX biosynthesis; coproporphyrinogen-III from 5-aminolevulinate: step 4/4. Catalyzes the decarboxylation of four acetate groups of uroporphyrinogen-III to yield coproporphyrinogen-III. The protein is Uroporphyrinogen decarboxylase of Cupriavidus necator (strain ATCC 17699 / DSM 428 / KCTC 22496 / NCIMB 10442 / H16 / Stanier 337) (Ralstonia eutropha).